The chain runs to 830 residues: Heavy metal tolerance protein (830 aa).

Positions 1–27 are cleaved as a signal peptide; that stretch reads MVLRYNSPRLNILELVLLYVGFFSIGS. 3 consecutive transmembrane segments (helical) span residues 51-71, 88-108, and 126-146; these read PIGI…VDIS, TTVV…ISCA, and LSVL…IVYS. The N-linked (GlcNAc...) asparagine glycan is linked to asparagine 150. The next 3 helical transmembrane spans lie at 156 to 176, 263 to 283, and 304 to 324; these read IVLA…AIYL, FQIF…ILAP, and DVIL…IGSL. The ABC transmembrane type-1 domain maps to 265-550; it reads IFICIVLLFL…FGTLYRSLQN (286 aa). A glycan (N-linked (GlcNAc...) asparagine) is linked at asparagine 350. 2 helical membrane-spanning segments follow: residues 381 to 401 and 403 to 423; these read VVFQ…YFFI and FDIY…YVTV. Residues 429–433, 492–495, and glycine 542 contribute to the glutathione site; these read RTEAR and NIVQ. The chain crosses the membrane as a helical span at residues 490–511; sequence FLNIVQGGIFTFSLAIACLLSA. Residues 584-818 enclose the ABC transporter domain; that stretch reads VIFSHVSFAY…DGGAYKKMWF (235 aa). Residues tyrosine 593 and 617–628 each bind ATP; that span reads GESGGGKSTIMR.

It belongs to the ABC transporter superfamily. ABCB family. Heavy Metal importer (TC 3.A.1.210) subfamily.

It localises to the vacuole membrane. Its function is as follows. Involved in metal tolerance. Probably involved in the transport of metal-bound phytochelatins. Compartmentalizes cadmium within vacuoles, thereby protecting cells from cadmium toxicity. This Schizosaccharomyces pombe (strain 972 / ATCC 24843) (Fission yeast) protein is Heavy metal tolerance protein (hmt1).